The chain runs to 386 residues: MSYIFSSESVSKGHPDKVADFIADSVLDLVLKNDPKARCAIEVALAHTTVYIFGEVSTSYILTDEIIIETAKKAIDFCGYNDEKFIFDAKSATYHVNIHKQSADIALGVDETDNKEQGAGDQGIMFGYAKDDTKELLPLPIFLAHELTKRLAFVREEGIVSGLGPDGKSQVSVLYNENHEPLEVTAIVLSTQHEASKTLESVKADMMKHVILEVIPKHLITDNTKYYINPTGRFVIGGPVGDSGLTGRKLIVDTYGGYSRHGGGAFSGKDASKVDRSASYMARYLAKQVVGSGIAKTCEIQLAYAIGVAEPVSLYVNTFGTSKVSNEVIAETISKHFDLRPKAIINYLGLTNPIFKQTTHNGHFGKLESNLSWEKLDKIEIFEQLV.

His-14 contacts ATP. Asp-16 contributes to the Mg(2+) binding site. Glu-42 lines the K(+) pocket. Residues Glu-55 and Gln-101 each contribute to the L-methionine site. Positions 101-111 (QSADIALGVDE) are flexible loop. ATP-binding positions include 166–168 (DGK), 233–234 (RF), Asp-242, 248–249 (RK), Ala-265, and Lys-269. Asp-242 provides a ligand contact to L-methionine. L-methionine is bound at residue Lys-273.

This sequence belongs to the AdoMet synthase family. Homotetramer; dimer of dimers. The cofactor is Mg(2+). K(+) serves as cofactor.

The protein localises to the cytoplasm. The enzyme catalyses L-methionine + ATP + H2O = S-adenosyl-L-methionine + phosphate + diphosphate. It participates in amino-acid biosynthesis; S-adenosyl-L-methionine biosynthesis; S-adenosyl-L-methionine from L-methionine: step 1/1. In terms of biological role, catalyzes the formation of S-adenosylmethionine (AdoMet) from methionine and ATP. The overall synthetic reaction is composed of two sequential steps, AdoMet formation and the subsequent tripolyphosphate hydrolysis which occurs prior to release of AdoMet from the enzyme. This Acholeplasma laidlawii (strain PG-8A) protein is S-adenosylmethionine synthase.